Consider the following 193-residue polypeptide: Ion-translocating oxidoreductase complex subunit A (193 aa).

Transmembrane regions (helical) follow at residues 5–25 (LLLF…FLGL), 39–59 (IGMG…AWMV), 62–82 (FILL…LVIA), 102–122 (LLGI…VALL), 134–154 (AVYG…FAAI), and 171–191 (SIAL…TGLV).

Belongs to the NqrDE/RnfAE family. In terms of assembly, the complex is composed of six subunits: RnfA, RnfB, RnfC, RnfD, RnfE and RnfG.

Its subcellular location is the cell inner membrane. In terms of biological role, part of a membrane-bound complex that couples electron transfer with translocation of ions across the membrane. The chain is Ion-translocating oxidoreductase complex subunit A from Yersinia pestis bv. Antiqua (strain Nepal516).